Here is a 554-residue protein sequence, read N- to C-terminus: Arginine--tRNA ligase (554 aa).

Residues 132–142 carry the 'HIGH' region motif; it reads ANPTGPIHLGG.

This sequence belongs to the class-I aminoacyl-tRNA synthetase family. Monomer.

The protein localises to the cytoplasm. It carries out the reaction tRNA(Arg) + L-arginine + ATP = L-arginyl-tRNA(Arg) + AMP + diphosphate. This chain is Arginine--tRNA ligase, found in Kineococcus radiotolerans (strain ATCC BAA-149 / DSM 14245 / SRS30216).